The primary structure comprises 67 residues: Large ribosomal subunit protein bL31 (67 aa).

It belongs to the bacterial ribosomal protein bL31 family. Type A subfamily. As to quaternary structure, part of the 50S ribosomal subunit.

In terms of biological role, binds the 23S rRNA. The polypeptide is Large ribosomal subunit protein bL31 (Finegoldia magna (strain ATCC 29328 / DSM 20472 / WAL 2508) (Peptostreptococcus magnus)).